The sequence spans 386 residues: MSTADIIARCEALYEDLDFTAARQWKEADPSRKVIAYMPVYVPREIIHAAGMLPLGIMGGGDGLEVIHGDAFYQSYICRIPRSTIELGLSKRMDFVDGMLFPSICDVIRNLSGMWKLMFPGKYVRYFDVPQNYRDDVGGNYYTAELNELREGLEHLSGRKITDDALRASIKVYNENRKLVQDVYGLRSREPWKVPSADVYLLMRAGLVLPVEEHNQMLKDYLAAAVKVEAQKRDNCRVIINGSFCEQPPLNLIKSIELSGCYIVDDDYMIVHRFLRNEVSTAGDPMQNLSLAFLHESISTAAKYDDKEEDKGKYLLEQVRTNAAEGVIFAAPSFCDPALLERPMLADRCSENKVPYISFKYAENSGQMQPIREQAGTFADSIKLWS.

Belongs to the FldB/FldC dehydratase alpha/beta subunit family. Heterotetramer composed of A, B, C, and D subunits. Iron-sulfur cluster serves as cofactor. An oxidized flavin is required as a cofactor.

The enzyme catalyses cyclohexa-1,5-diene-1-carbonyl-CoA + oxidized 2[4Fe-4S]-[ferredoxin] + 2 ADP + 2 phosphate = reduced 2[4Fe-4S]-[ferredoxin] + benzoyl-CoA + 2 ATP + 2 H2O. It carries out the reaction 3-hydroxybenzoyl-CoA + AH2 + 2 ATP + 2 H2O = 3-hydroxycyclohexa-1,5-diene-1-carbonyl-CoA + A + 2 ADP + 2 phosphate + 2 H(+). Functionally, catalyzes the anaerobic reduction of benzoyl-CoA and 3-hydroxybenzoyl-CoA to form cyclohexa-1,5-diene-1-carbonyl-CoA and 3-hydroxycyclohexa-1,5-diene-1-carbonyl-CoA, respectively. The enzyme also reduces other benzoyl-CoA analogs with small substituents at the aromatic ring. The protein is Benzoyl-CoA reductase subunit C (bcrC) of Thauera aromatica.